The primary structure comprises 438 residues: MLNARPWVPEGPEEYMQALAKRFAGQTPDQNERDLLAFVEENRVIHERDCFNLNPATNAINPKAEAMLASGVGSRPSLGYPGDKYEMGLEGVEKIEVLAAELVAEVFGAKYAELRVASGALANLYAYMIAAKPGDTVFVPSATIGGHFSHHANGAAGMYGVNSYLMPFDADKYTVDVDRLREDARRLKPKMITLGNSLNLFPHPIKEVREIADEIGALVLFDAAHLCGLIAGHSWQQPLEEGAHLMTLSTYKSLAGPAGGLIVTNDAEVAKRLDTVAYPGMTANFDSARSASIAMTMLDWQVYGREYAAEMVRTSKAFAEALVKEGLPVFARDRGITTSHQFAIEAHDFGGGQAMAKLLRRANILACGIGLPLPEIAGDVNGLRMGTPELVRWGMRSEHMPQLAKFIADVLLGRQVPEEVAPAVTDYRRQFNKLHFLR.

Position 252 is an N6-(pyridoxal phosphate)lysine (Lys-252).

The protein belongs to the SHMT family. Alpha-methylserine aldolase subfamily. As to quaternary structure, homodimer. It depends on pyridoxal 5'-phosphate as a cofactor.

The enzyme catalyses 2-methyl-L-serine = formaldehyde + L-alanine. In the alpha-methyl-L-serine synthesis reaction, activity is inhibited by an excess amount of formaldehyde (at a concentration greater than 10 mM). Catalyzes the reversible interconversion of alpha-methyl-L-serine to L-alanine and formaldehyde. Cannot use alpha-methyl-D-serine, L-serine or D-serine. Cannot use D-alanine instead of L-alanine as the substrate for alpha-methyl-L-serine synthesis. Does not require tetrahydrofolate (THF) for activity. The polypeptide is Alpha-methylserine aldolase (Ralstonia sp).